Here is a 541-residue protein sequence, read N- to C-terminus: Chaperonin GroEL 1 (541 aa).

ATP contacts are provided by residues T29–P32, D86–T90, G413, and D492.

The protein belongs to the chaperonin (HSP60) family. As to quaternary structure, forms a cylinder of 14 subunits composed of two heptameric rings stacked back-to-back. Interacts with the co-chaperonin GroES.

It is found in the cytoplasm. The catalysed reaction is ATP + H2O + a folded polypeptide = ADP + phosphate + an unfolded polypeptide.. Together with its co-chaperonin GroES, plays an essential role in assisting protein folding. The GroEL-GroES system forms a nano-cage that allows encapsulation of the non-native substrate proteins and provides a physical environment optimized to promote and accelerate protein folding. In Rhodococcus jostii (strain RHA1), this protein is Chaperonin GroEL 1.